A 58-amino-acid polypeptide reads, in one-letter code: Large ribosomal subunit protein uL30 (58 aa).

The protein belongs to the universal ribosomal protein uL30 family. Part of the 50S ribosomal subunit.

In Vibrio campbellii (strain ATCC BAA-1116), this protein is Large ribosomal subunit protein uL30.